The sequence spans 704 residues: Penicillin-binding protein H (704 aa).

Residues 23-43 (FFLAVFVLFTALIFKLGVVQI) form a helical membrane-spanning segment. Positions 197–223 (MNPNKSNSNGKNGALLDEKKNSSQRPK) are disordered. The segment covering 200 to 209 (NKSNSNGKNG) has biased composition (low complexity). Positions 212 to 223 (LDEKKNSSQRPK) are enriched in basic and acidic residues. S415 acts as the Acyl-ester intermediate in catalysis.

Belongs to the transpeptidase family.

The protein localises to the cell membrane. The catalysed reaction is Preferential cleavage: (Ac)2-L-Lys-D-Ala-|-D-Ala. Also transpeptidation of peptidyl-alanyl moieties that are N-acyl substituents of D-alanine.. Its pathway is cell wall biogenesis; peptidoglycan biosynthesis. In terms of biological role, involved in the polymerization of peptidoglycan. Plays a redundant role with PBP-2A (pbpA) in determining the rod shape of the cell during vegetative growth and spore outgrowth. The polypeptide is Penicillin-binding protein H (Bacillus subtilis (strain 168)).